Consider the following 270-residue polypeptide: Dermonecrotic toxin LsaSicTox-alphaIB1av (270 aa).

Histidine 2 is a catalytic residue. Mg(2+)-binding residues include glutamate 22 and aspartate 24. The active-site Nucleophile is histidine 38. Disulfide bonds link cysteine 42/cysteine 48 and cysteine 44/cysteine 187. Aspartate 82 contacts Mg(2+).

This sequence belongs to the arthropod phospholipase D family. Class II subfamily. Requires Mg(2+) as cofactor. In terms of tissue distribution, expressed by the venom gland.

Its subcellular location is the secreted. It carries out the reaction an N-(acyl)-sphingosylphosphocholine = an N-(acyl)-sphingosyl-1,3-cyclic phosphate + choline. The enzyme catalyses an N-(acyl)-sphingosylphosphoethanolamine = an N-(acyl)-sphingosyl-1,3-cyclic phosphate + ethanolamine. The catalysed reaction is a 1-acyl-sn-glycero-3-phosphocholine = a 1-acyl-sn-glycero-2,3-cyclic phosphate + choline. It catalyses the reaction a 1-acyl-sn-glycero-3-phosphoethanolamine = a 1-acyl-sn-glycero-2,3-cyclic phosphate + ethanolamine. In terms of biological role, dermonecrotic toxins cleave the phosphodiester linkage between the phosphate and headgroup of certain phospholipids (sphingolipid and lysolipid substrates), forming an alcohol (often choline) and a cyclic phosphate. This toxin acts on sphingomyelin (SM). It may also act on ceramide phosphoethanolamine (CPE), lysophosphatidylcholine (LPC) and lysophosphatidylethanolamine (LPE), but not on lysophosphatidylserine (LPS), and lysophosphatidylglycerol (LPG). It acts by transphosphatidylation, releasing exclusively cyclic phosphate products as second products. Induces dermonecrosis, hemolysis, increased vascular permeability, edema, inflammatory response, and platelet aggregation. This is Dermonecrotic toxin LsaSicTox-alphaIB1av from Loxosceles sabina (Tucson recluse spider).